A 145-amino-acid chain; its full sequence is Large ribosomal subunit protein uL15 (145 aa).

Positions 1-58 are disordered; the sequence is MFSLLKPKGAAKRRKIVGRGPGSGLGKTSGRGQKGQKARNTSPRLGFEGGQTPLYRRL. Positions 19–33 are enriched in gly residues; the sequence is RGPGSGLGKTSGRGQ.

This sequence belongs to the universal ribosomal protein uL15 family. Part of the 50S ribosomal subunit.

Functionally, binds to the 23S rRNA. The sequence is that of Large ribosomal subunit protein uL15 from Borreliella afzelii (strain PKo) (Borrelia afzelii).